Here is a 210-residue protein sequence, read N- to C-terminus: tRNA (guanine-N(7)-)-methyltransferase (210 aa).

S-adenosyl-L-methionine contacts are provided by Glu36, Glu61, Asp90, and Asp112. Residue Asp112 is part of the active site. Substrate is bound by residues Lys116, Asp148, and 188–191 (TEYE).

The protein belongs to the class I-like SAM-binding methyltransferase superfamily. TrmB family.

It catalyses the reaction guanosine(46) in tRNA + S-adenosyl-L-methionine = N(7)-methylguanosine(46) in tRNA + S-adenosyl-L-homocysteine. The protein operates within tRNA modification; N(7)-methylguanine-tRNA biosynthesis. Catalyzes the formation of N(7)-methylguanine at position 46 (m7G46) in tRNA. This is tRNA (guanine-N(7)-)-methyltransferase from Mycoplasma pneumoniae (strain ATCC 29342 / M129 / Subtype 1) (Mycoplasmoides pneumoniae).